The following is a 62-amino-acid chain: Large ribosomal subunit protein bL28 (62 aa).

The protein belongs to the bacterial ribosomal protein bL28 family.

The protein is Large ribosomal subunit protein bL28 of Streptococcus mutans serotype c (strain ATCC 700610 / UA159).